The primary structure comprises 332 residues: Biotin synthase (332 aa).

The region spanning 51–278 is the Radical SAM core domain; the sequence is RTIQLSTLMS…KSYVRLSAGR (228 aa). [4Fe-4S] cluster-binding residues include Cys-66, Cys-70, and Cys-73. 4 residues coordinate [2Fe-2S] cluster: Cys-110, Cys-141, Cys-201, and Arg-273.

This sequence belongs to the radical SAM superfamily. Biotin synthase family. In terms of assembly, homodimer. Requires [4Fe-4S] cluster as cofactor. [2Fe-2S] cluster is required as a cofactor.

The catalysed reaction is (4R,5S)-dethiobiotin + (sulfur carrier)-SH + 2 reduced [2Fe-2S]-[ferredoxin] + 2 S-adenosyl-L-methionine = (sulfur carrier)-H + biotin + 2 5'-deoxyadenosine + 2 L-methionine + 2 oxidized [2Fe-2S]-[ferredoxin]. It participates in cofactor biosynthesis; biotin biosynthesis; biotin from 7,8-diaminononanoate: step 2/2. Its function is as follows. Catalyzes the conversion of dethiobiotin (DTB) to biotin by the insertion of a sulfur atom into dethiobiotin via a radical-based mechanism. The protein is Biotin synthase of Haemophilus influenzae (strain PittGG).